A 572-amino-acid chain; its full sequence is Ribonuclease Y (572 aa).

Residues 1 to 21 form a helical membrane-spanning segment; it reads MPTLYVILSLLLGLIGGVLVQ. Disordered regions lie at residues 59–85 and 110–142; these read HEAA…DAAE and QLEA…ERED. Composition is skewed to basic and acidic residues over residues 110 to 119 and 129 to 142; these read QLEAEREQAK and LSTD…ERED. The region spanning 262-322 is the KH domain; sequence SVSVVPIPSD…LRREVARHVL (61 aa). Residues 388 to 481 enclose the HD domain; it reads VLKHSVQVAH…VAAADAISAA (94 aa).

Belongs to the RNase Y family.

Its subcellular location is the cell membrane. Its function is as follows. Endoribonuclease that initiates mRNA decay. This Deinococcus radiodurans (strain ATCC 13939 / DSM 20539 / JCM 16871 / CCUG 27074 / LMG 4051 / NBRC 15346 / NCIMB 9279 / VKM B-1422 / R1) protein is Ribonuclease Y.